The sequence spans 249 residues: Small ribosomal subunit protein uS3 (249 aa).

Residues 38–106 form the KH type-2 domain; the sequence is IRDFLSKGLE…QVQLNILEVK (69 aa). The span at 218–233 shows a compositional bias: basic and acidic residues; it reads ARDDRGSRRGRNDRPR. The tract at residues 218–249 is disordered; it reads ARDDRGSRRGRNDRPRRGGGRRRRAAEQKQEG.

Belongs to the universal ribosomal protein uS3 family. Part of the 30S ribosomal subunit. Forms a tight complex with proteins S10 and S14.

In terms of biological role, binds the lower part of the 30S subunit head. Binds mRNA in the 70S ribosome, positioning it for translation. This chain is Small ribosomal subunit protein uS3, found in Corynebacterium kroppenstedtii (strain DSM 44385 / JCM 11950 / CIP 105744 / CCUG 35717).